We begin with the raw amino-acid sequence, 71 residues long: Small ribosomal subunit protein bS21 (71 aa).

Belongs to the bacterial ribosomal protein bS21 family.

In Shewanella woodyi (strain ATCC 51908 / MS32), this protein is Small ribosomal subunit protein bS21.